The chain runs to 592 residues: Prospero homeobox protein 2 (592 aa).

5 disordered regions span residues 20–56 (EACT…PEWF), 85–129 (GNAQ…RKGG), 155–218 (KPRD…LPSG), 308–336 (RLDS…PLTA), and 353–382 (RYNN…LRPW). A compositionally biased stretch (basic residues) spans 95–106 (CPKKARERKRKQ). Positions 201 to 211 (SGAEKHQESEK) are enriched in basic and acidic residues. Residues 314–331 (YPIPPRMTPKPCQDPPAN) show a composition bias toward pro residues. Over residues 360 to 377 (SSSPPQDSSSQRHPSSEP) the composition is skewed to low complexity. In terms of domain architecture, Prospero-type homeo spans 437-495 (QEGLNPGHLKKAKLMFFFTRYPSSNLLKVYFPDVQFNRCITSQMIKWFSNFREFYYIQM). The interval 437–592 (QEGLNPGHLK…EIFKSSSYPQ (156 aa)) is homeo-Prospero. A Prospero domain is found at 496–592 (EKSARQAISD…EIFKSSSYPQ (97 aa)).

The protein belongs to the Prospero homeodomain family.

The protein localises to the nucleus. Functionally, transcription regulator. Does not seem to be essential for embryonic development and postnatal survival. In Homo sapiens (Human), this protein is Prospero homeobox protein 2 (PROX2).